The primary structure comprises 90 residues: MIQRQFTVYGCVQGVGFRFFTAREANKLGIQGYVKNQADGSVRVVAAGSDRQVAAFRDWLEQGPPTAEVTNLLEQEYTGGRVFSDFTIER.

Positions 3–90 (QRQFTVYGCV…RVFSDFTIER (88 aa)) constitute an Acylphosphatase-like domain. Catalysis depends on residues R18 and N36.

This sequence belongs to the acylphosphatase family.

The catalysed reaction is an acyl phosphate + H2O = a carboxylate + phosphate + H(+). This Actinobacillus succinogenes (strain ATCC 55618 / DSM 22257 / CCUG 43843 / 130Z) protein is Acylphosphatase (acyP).